Here is a 361-residue protein sequence, read N- to C-terminus: Protein-L-isoaspartate O-methyltransferase domain-containing protein 2 (361 aa).

Gly2 carries N-myristoyl glycine lipidation. Residue Ser64 is part of the active site. 3 adoMet binding motif regions span residues 85 to 94, 160 to 164, and 181 to 191; these read LNLGSGTGYL, YDRVY, and LKVGGILVMPL. Residues 240–250 form a BC-box region; sequence VRSLQDLARIA. Residues 303–312 show a composition bias toward polar residues; that stretch reads SNPSDDNSSG. The interval 303 to 335 is disordered; sequence SNPSDDNSSGDLEEERREEEATTPPDAKPEPPV. The segment at 345–348 is CUL-box; the sequence is LPLP.

The protein belongs to the methyltransferase superfamily. L-isoaspartyl/D-aspartyl protein methyltransferase family.

It is found in the cytoplasm. In terms of biological role, may act as a substrate recognition component of an ECS (Elongin BC-CUL5-SOCS-box protein) E3 ubiquitin ligase complex which mediates the ubiquitination and subsequent proteasomal degradation of target proteins. May bind to the methyltransferase cofactor S-adenosylmethionine (AdoMet) via the N-terminal AdoMet binding motif, but probably does not display methyltransferase activity. This is Protein-L-isoaspartate O-methyltransferase domain-containing protein 2 (PCMTD2) from Bos taurus (Bovine).